A 229-amino-acid polypeptide reads, in one-letter code: MGEPQQVSALPIPPMQYIKEYTDENIRKGLAPKPPLPIKDSYMMFGNQFQCDDLIIRPLETQGIERLHPMQFDHKKELRKLLMSILVNFLDMLDILIRSPGSIRREEKLEDLKLLFVHMHHLINEYRPHQARETLRVMMEVQKRQRLETAERFQKHLERVVEMIQNCLASLPNDLPLSDGAVSVKTEPMDVREPCTDHHAGPQEAAAASLKETTIDKDAAMCVIIDEMT.

Belongs to the Mediator complex subunit 7 family. Component of the Mediator complex.

It is found in the nucleus. In terms of biological role, component of the Mediator complex, a coactivator involved in the regulated transcription of nearly all RNA polymerase II-dependent genes. Mediator functions as a bridge to convey information from gene-specific regulatory proteins to the basal RNA polymerase II transcription machinery. Mediator is recruited to promoters by direct interactions with regulatory proteins and serves as a scaffold for the assembly of a functional preinitiation complex with RNA polymerase II and the general transcription factors. This Xenopus tropicalis (Western clawed frog) protein is Mediator of RNA polymerase II transcription subunit 7 (med7).